We begin with the raw amino-acid sequence, 21 residues long: Pollen allergen Ole e 7 (21 aa).

The sequence is that of Pollen allergen Ole e 7 from Olea europaea (Common olive).